The chain runs to 482 residues: Chromosome stability protein 9 (482 aa).

Disordered stretches follow at residues 239–263 (SSLRNSSKNNNGTVTPSTSGRVNKN) and 418–482 (SGLA…RRIR). Positions 240-249 (SLRNSSKNNN) are enriched in low complexity. Over residues 250-263 (GTVTPSTSGRVNKN) the composition is skewed to polar residues. Positions 418–437 (SGLAFSSSSNSLQQSKLPKS) are enriched in low complexity. Polar residues-rich tracts occupy residues 440 to 453 (LKRSNSTQQLTNTH) and 463 to 473 (RSSNTVLGSSK).

In terms of assembly, component of the synapsis initiation complex composed of at least ZIP2, ZIP3, MSH4 and MSH5. Also interacts with ZIP1, MRE11, RAD51 and RAD53.

It is found in the nucleus. The protein resides in the chromosome. Functionally, component of the synapsis initiation complex (SIC) necessary for the synaptonemal complex assembly. Stabilizes the ZIP2 component to the chromosomes. The SIC complex loads onto chromosomes and nucleates ZIP1 polymerization, a molecular zipper that acts to bring homologous chromosomes in close apposition, which is required for meiotic crossover. May also be involved in double strand break repair. The sequence is that of Chromosome stability protein 9 (CST9) from Saccharomyces cerevisiae (strain ATCC 204508 / S288c) (Baker's yeast).